The sequence spans 93 residues: Putative regulatory protein Amet_2791 (93 aa).

The protein belongs to the RemA family.

This chain is Putative regulatory protein Amet_2791, found in Alkaliphilus metalliredigens (strain QYMF).